Consider the following 178-residue polypeptide: ATP synthase subunit delta (178 aa).

It belongs to the ATPase delta chain family. F-type ATPases have 2 components, F(1) - the catalytic core - and F(0) - the membrane proton channel. F(1) has five subunits: alpha(3), beta(3), gamma(1), delta(1), epsilon(1). F(0) has three main subunits: a(1), b(2) and c(10-14). The alpha and beta chains form an alternating ring which encloses part of the gamma chain. F(1) is attached to F(0) by a central stalk formed by the gamma and epsilon chains, while a peripheral stalk is formed by the delta and b chains.

It localises to the cell membrane. In terms of biological role, f(1)F(0) ATP synthase produces ATP from ADP in the presence of a proton or sodium gradient. F-type ATPases consist of two structural domains, F(1) containing the extramembraneous catalytic core and F(0) containing the membrane proton channel, linked together by a central stalk and a peripheral stalk. During catalysis, ATP synthesis in the catalytic domain of F(1) is coupled via a rotary mechanism of the central stalk subunits to proton translocation. Functionally, this protein is part of the stalk that links CF(0) to CF(1). It either transmits conformational changes from CF(0) to CF(1) or is implicated in proton conduction. The polypeptide is ATP synthase subunit delta (Lysinibacillus sphaericus (strain C3-41)).